Reading from the N-terminus, the 216-residue chain is Ribose-5-phosphate isomerase A (216 aa).

Substrate is bound by residues 26–29, 79–82, and 92–95; these read TGST, DGAD, and KGGG. The Proton acceptor role is filled by glutamate 101. Residue lysine 119 participates in substrate binding.

This sequence belongs to the ribose 5-phosphate isomerase family. Homodimer.

The catalysed reaction is aldehydo-D-ribose 5-phosphate = D-ribulose 5-phosphate. Its pathway is carbohydrate degradation; pentose phosphate pathway; D-ribose 5-phosphate from D-ribulose 5-phosphate (non-oxidative stage): step 1/1. Catalyzes the reversible conversion of ribose-5-phosphate to ribulose 5-phosphate. The sequence is that of Ribose-5-phosphate isomerase A from Legionella pneumophila subsp. pneumophila (strain Philadelphia 1 / ATCC 33152 / DSM 7513).